The chain runs to 126 residues: Glycine cleavage system H protein (126 aa).

The Lipoyl-binding domain occupies 24–105; it reads TLTVGITDHA…AYGVWLFKIK (82 aa). Lys65 is modified (N6-lipoyllysine).

This sequence belongs to the GcvH family. The glycine cleavage system is composed of four proteins: P, T, L and H. It depends on (R)-lipoate as a cofactor.

Functionally, the glycine cleavage system catalyzes the degradation of glycine. The H protein shuttles the methylamine group of glycine from the P protein to the T protein. In Burkholderia cenocepacia (strain ATCC BAA-245 / DSM 16553 / LMG 16656 / NCTC 13227 / J2315 / CF5610) (Burkholderia cepacia (strain J2315)), this protein is Glycine cleavage system H protein.